A 741-amino-acid chain; its full sequence is uncharacterized protein (741 aa).

Residues 64-103 adopt a coiled-coil conformation; it reads VETLLCMLEQLTIRIEFLTKEIAQQEAAYKDIQNTQKSLV. A compositionally biased stretch (polar residues) spans 137–155; the sequence is FERQNRTAPLQSKVTTASL. Disordered regions lie at residues 137–214, 280–318, and 330–364; these read FERQ…TGLP, RTYS…SKSS, and SVSS…FLTP. 2 stretches are compositionally biased toward low complexity: residues 161-173 and 197-209; these read RTSM…ASRT and KSKS…KSLA. The segment covering 298–308 has biased composition (polar residues); that stretch reads SHLPNRTTEVP. 2 stretches are compositionally biased toward low complexity: residues 309-318 and 330-344; these read SISKQLSKSS and SVSS…TPQS. Residues 346–356 are compositionally biased toward polar residues; sequence PRAQSASTETA. Position 499–506 (499–506) interacts with ATP; sequence GPPGTGKT.

The protein belongs to the AAA ATPase family.

Its subcellular location is the cytoplasm. The protein localises to the nucleus. This is an uncharacterized protein from Schizosaccharomyces pombe (strain 972 / ATCC 24843) (Fission yeast).